Reading from the N-terminus, the 210-residue chain is MADS-box protein AeAP3-2 (210 aa).

An MADS-box domain is found at 1 to 36 (GGLLKKARELAILCDAQLGVIIFSSSGKMFEFSSPP). The K-box domain maps to 59–149 (NQQVYCEITR…YRVIQDHHAA (91 aa)).

In terms of tissue distribution, expressed exclusively in the carpel.

It localises to the nucleus. Its function is as follows. Probable transcription factor. This is MADS-box protein AeAP3-2 (AP3-2) from Asarum europaeum (Asarabacca).